We begin with the raw amino-acid sequence, 242 residues long: Large ribosomal subunit protein uL1 (242 aa).

This sequence belongs to the universal ribosomal protein uL1 family. Part of the 50S ribosomal subunit.

Functionally, binds directly to 23S rRNA. The L1 stalk is quite mobile in the ribosome, and is involved in E site tRNA release. In terms of biological role, protein L1 is also a translational repressor protein, it controls the translation of the L11 operon by binding to its mRNA. The chain is Large ribosomal subunit protein uL1 from Sulfurihydrogenibium sp. (strain YO3AOP1).